The primary structure comprises 311 residues: Methionyl-tRNA formyltransferase (311 aa).

110 to 113 lines the (6S)-5,6,7,8-tetrahydrofolate pocket; it reads SLLP.

Belongs to the Fmt family.

The enzyme catalyses L-methionyl-tRNA(fMet) + (6R)-10-formyltetrahydrofolate = N-formyl-L-methionyl-tRNA(fMet) + (6S)-5,6,7,8-tetrahydrofolate + H(+). Functionally, attaches a formyl group to the free amino group of methionyl-tRNA(fMet). The formyl group appears to play a dual role in the initiator identity of N-formylmethionyl-tRNA by promoting its recognition by IF2 and preventing the misappropriation of this tRNA by the elongation apparatus. This is Methionyl-tRNA formyltransferase from Streptococcus thermophilus (strain ATCC BAA-250 / LMG 18311).